The primary structure comprises 396 residues: S-adenosylmethionine synthase (396 aa).

Residue histidine 16 participates in ATP binding. Mg(2+) is bound at residue aspartate 18. Residue glutamate 44 coordinates K(+). Positions 57 and 100 each coordinate L-methionine. Positions 100-110 (QSVDIAQGVDR) are flexible loop. ATP-binding positions include 165–167 (DAK), aspartate 240, 246–247 (RK), alanine 263, and lysine 267. Aspartate 240 contacts L-methionine. An L-methionine-binding site is contributed by lysine 271.

This sequence belongs to the AdoMet synthase family. Homotetramer; dimer of dimers. Mg(2+) is required as a cofactor. K(+) serves as cofactor.

It is found in the cytoplasm. It catalyses the reaction L-methionine + ATP + H2O = S-adenosyl-L-methionine + phosphate + diphosphate. It participates in amino-acid biosynthesis; S-adenosyl-L-methionine biosynthesis; S-adenosyl-L-methionine from L-methionine: step 1/1. Catalyzes the formation of S-adenosylmethionine (AdoMet) from methionine and ATP. The overall synthetic reaction is composed of two sequential steps, AdoMet formation and the subsequent tripolyphosphate hydrolysis which occurs prior to release of AdoMet from the enzyme. The sequence is that of S-adenosylmethionine synthase from Pseudomonas putida (strain ATCC 700007 / DSM 6899 / JCM 31910 / BCRC 17059 / LMG 24140 / F1).